We begin with the raw amino-acid sequence, 594 residues long: UvrABC system protein C (594 aa).

The region spanning 14–91 (DQPGCYLMKD…IKKYDPKYNI (78 aa)) is the GIY-YIG domain. The UVR domain occupies 196 to 231 (KEIRSELETKMYEASEKLEFERAKELRDQIAHIDAI).

It belongs to the UvrC family. As to quaternary structure, interacts with UvrB in an incision complex.

Its subcellular location is the cytoplasm. The UvrABC repair system catalyzes the recognition and processing of DNA lesions. UvrC both incises the 5' and 3' sides of the lesion. The N-terminal half is responsible for the 3' incision and the C-terminal half is responsible for the 5' incision. In Bacillus mycoides (strain KBAB4) (Bacillus weihenstephanensis), this protein is UvrABC system protein C.